An 80-amino-acid polypeptide reads, in one-letter code: MNTQELCKIFVAREYPLVVVPFIYFVLFLHQKYHTTLNYVWYPTCSKRIWVREKGRKCSFFFFSKVPRSDGFANNRCQRK.

A helical membrane pass occupies residues 10–29; it reads FVAREYPLVVVPFIYFVLFL.

It localises to the membrane. This is an uncharacterized protein from Saccharomyces cerevisiae (strain ATCC 204508 / S288c) (Baker's yeast).